We begin with the raw amino-acid sequence, 126 residues long: Large ribosomal subunit protein eL28 (126 aa).

Position 2 is an N-acetylserine (Ser-2).

Belongs to the eukaryotic ribosomal protein eL28 family.

This is Large ribosomal subunit protein eL28 (rpl-28) from Caenorhabditis elegans.